Consider the following 81-residue polypeptide: Cytochrome b559 subunit alpha (81 aa).

The helical transmembrane segment at 21–35 (VIHSITIPSLFVSGW) threads the bilayer. A heme-binding site is contributed by His23.

Belongs to the PsbE/PsbF family. As to quaternary structure, heterodimer of an alpha subunit and a beta subunit. PSII is composed of 1 copy each of membrane proteins PsbA, PsbB, PsbC, PsbD, PsbE, PsbF, PsbH, PsbI, PsbJ, PsbK, PsbL, PsbM, PsbT, PsbX, PsbY, PsbZ, Psb30/Ycf12, at least 3 peripheral proteins of the oxygen-evolving complex and a large number of cofactors. It forms dimeric complexes. Heme b is required as a cofactor.

The protein localises to the plastid. It localises to the chloroplast thylakoid membrane. This b-type cytochrome is tightly associated with the reaction center of photosystem II (PSII). PSII is a light-driven water:plastoquinone oxidoreductase that uses light energy to abstract electrons from H(2)O, generating O(2) and a proton gradient subsequently used for ATP formation. It consists of a core antenna complex that captures photons, and an electron transfer chain that converts photonic excitation into a charge separation. The sequence is that of Cytochrome b559 subunit alpha from Mesostigma viride (Green alga).